The following is an 823-amino-acid chain: Protein ROOT HAIR DEFECTIVE 3 homolog 2 (823 aa).

Residues 1 to 688 (MEVPISGGGG…EAHRRSNNWL (688 aa)) lie on the Cytoplasmic side of the membrane. The 216-residue stretch at 45-260 (GLSYAVVSIV…IAPGGLAADR (216 aa)) folds into the GB1/RHD3-type G domain. 55–62 (GPQGSGKS) lines the GTP pocket. Residues 226-246 (LSSYEEKENLFKEQVGQLRQR) are a coiled coil. A helical transmembrane segment spans residues 689–709 (PPAWTVLLLAILGYNEFIFLL). Residues 710–712 (RNP) are Lumenal-facing. The chain crosses the membrane as a helical span at residues 713–733 (LYLLGLFVAFVVSYAAWLQYD). Topologically, residues 734–823 (ITAYFRHGTL…SVGSNSDDES (90 aa)) are cytoplasmic. The interval 770–823 (NQKSSSHPPRHRPPLHPQSFRNQAQQQSQAQVQYQAPSSLSSSSSVGSNSDDES) is disordered. Over residues 786-823 (PQSFRNQAQQQSQAQVQYQAPSSLSSSSSVGSNSDDES) the composition is skewed to low complexity.

The protein belongs to the TRAFAC class dynamin-like GTPase superfamily. GB1/RHD3 GTPase family. RHD3 subfamily.

The protein localises to the endoplasmic reticulum membrane. Functionally, probable GTP-binding protein that may be involved in cell development. This chain is Protein ROOT HAIR DEFECTIVE 3 homolog 2, found in Oryza sativa subsp. japonica (Rice).